The chain runs to 328 residues: MLTLESALTGAVASAMANIAVYPLDLSKTIIQSQVSPSSSEDSNEGKVLPNRRYKNVVDCMINIFKEKGILGLYQGMTVTTVATFVQNFVYFFWYTFIRKSYMKHKLLGLQSLKNRDGPITPSTIEELVLGVAAASISQLFTSPMAVVATRQQTVHSAESAKFTNVIKDIYRENNGDITAFWKGLRTGLALTINPSITYASFQRLKEVFFHDHSNDAGSLSAVQNFILGVLSKMISTLVTQPLIVAKAMLQSAGSKFTTFQEALLYLYKNEGLKSLWKGVLPQLTKGVIVQGLLFAFRGELTKSLKRLIFLYSSFFLKHNGQRKLAST.

6 helical membrane passes run 1-21, 78-98, 128-148, 185-202, 226-246, and 277-297; these read MLTL…NIAV, TVTT…YTFI, LVLG…MAVV, LRTG…YASF, FILG…LIVA, and WKGV…LFAF. 3 Solcar repeats span residues 1–101, 122–208, and 220–304; these read MLTL…IRKS, PSTI…LKEV, and LSAV…LTKS.

This sequence belongs to the mitochondrial carrier (TC 2.A.29) family.

Its subcellular location is the peroxisome membrane. Adenine nucleotide transporter involved in the uniport of ATP and adenine nucleotide hetero-exchange transport between the cytosol and the peroxisomal lumen. This transport is accompanied by a proton transport from the peroxisomal lumen to the cytosol. Transport of ATP into the peroxisome is required for beta-oxidation of medium-chain fatty acids. Required for growth on medium-chain fatty acids, pH gradient formation in peroxisomes and for normal peroxisome proliferation. The sequence is that of Peroxisomal adenine nucleotide transporter 1 (ANT1) from Saccharomyces cerevisiae (strain ATCC 204508 / S288c) (Baker's yeast).